The following is a 198-amino-acid chain: Na(+)-translocating NADH-quinone reductase subunit E (198 aa).

6 helical membrane passes run 11-31 (SIFI…FLAV), 39-59 (MGLG…NNLI), 77-97 (FLSF…LEMA), 110-130 (GIFL…SFMV), 140-160 (VVYG…MAGI), and 176-196 (LGIT…FSGI).

This sequence belongs to the NqrDE/RnfAE family. In terms of assembly, composed of six subunits; NqrA, NqrB, NqrC, NqrD, NqrE and NqrF.

It localises to the cell inner membrane. The enzyme catalyses a ubiquinone + n Na(+)(in) + NADH + H(+) = a ubiquinol + n Na(+)(out) + NAD(+). Its function is as follows. NQR complex catalyzes the reduction of ubiquinone-1 to ubiquinol by two successive reactions, coupled with the transport of Na(+) ions from the cytoplasm to the periplasm. NqrA to NqrE are probably involved in the second step, the conversion of ubisemiquinone to ubiquinol. This Aeromonas hydrophila subsp. hydrophila (strain ATCC 7966 / DSM 30187 / BCRC 13018 / CCUG 14551 / JCM 1027 / KCTC 2358 / NCIMB 9240 / NCTC 8049) protein is Na(+)-translocating NADH-quinone reductase subunit E.